Reading from the N-terminus, the 43-residue chain is Potassium channel toxin gamma-KTx 4.4 (43 aa).

Disulfide bonds link cysteine 5-cysteine 23, cysteine 11-cysteine 34, cysteine 20-cysteine 39, and cysteine 24-cysteine 41.

Belongs to the ergtoxin family. Gamma-KTx 4 subfamily. Expressed by the venom gland.

It localises to the secreted. Its function is as follows. Reversibly blocks Kv11/ERG potassium channels. The protein is Potassium channel toxin gamma-KTx 4.4 of Centruroides exilicauda (Bark scorpion).